We begin with the raw amino-acid sequence, 157 residues long: Ribonuclease H (157 aa).

The RNase H type-1 domain maps to 1–142; that stretch reads MKKKIKIFID…CDFLAKISAK (142 aa). The Mg(2+) site is built by Asp10, Glu48, Asp70, and Asp134.

The protein belongs to the RNase H family. As to quaternary structure, monomer. Mg(2+) is required as a cofactor.

The protein resides in the cytoplasm. It catalyses the reaction Endonucleolytic cleavage to 5'-phosphomonoester.. In terms of biological role, endonuclease that specifically degrades the RNA of RNA-DNA hybrids. The chain is Ribonuclease H from Wigglesworthia glossinidia brevipalpis.